A 325-amino-acid polypeptide reads, in one-letter code: D-alanine--D-alanine ligase (325 aa).

An ATP-grasp domain is found at 107-311; sequence KRLLLSESLP…YEALCVEVLK (205 aa). Residue 137–192 participates in ATP binding; the sequence is VDTLGLPLIVKPAREGSSLGLSKVTERAAMAAAVALAEKMDADILCEQFISGDEVT. The Mg(2+) site is built by D264, E278, and N280.

This sequence belongs to the D-alanine--D-alanine ligase family. It depends on Mg(2+) as a cofactor. The cofactor is Mn(2+).

It is found in the cytoplasm. It catalyses the reaction 2 D-alanine + ATP = D-alanyl-D-alanine + ADP + phosphate + H(+). The protein operates within cell wall biogenesis; peptidoglycan biosynthesis. Functionally, cell wall formation. In Polaromonas naphthalenivorans (strain CJ2), this protein is D-alanine--D-alanine ligase.